Consider the following 109-residue polypeptide: Staphostatin B (109 aa).

The tract at residues 97 to 101 is binds to staphopain B; sequence IGTSR.

It belongs to the protease inhibitor I57 (SspC) family. In terms of assembly, forms a stable non-covalent complex with prematurely activated/folded SspB.

Its subcellular location is the cytoplasm. Its function is as follows. Specifically inhibits the cysteine protease staphopain B (SspB) by blocking the active site of the enzyme. Probably required to protect cytoplasmic proteins from being degraded by prematurely activated/folded prostaphopain B. Also involved in growth capacity, viability and bacterial morphology. The polypeptide is Staphostatin B (sspC) (Staphylococcus aureus (strain NCTC 8325 / PS 47)).